A 247-amino-acid chain; its full sequence is tRNA pseudouridine synthase A (247 aa).

The active-site Nucleophile is the aspartate 52. Tyrosine 111 contacts substrate.

It belongs to the tRNA pseudouridine synthase TruA family. In terms of assembly, homodimer.

It carries out the reaction uridine(38/39/40) in tRNA = pseudouridine(38/39/40) in tRNA. In terms of biological role, formation of pseudouridine at positions 38, 39 and 40 in the anticodon stem and loop of transfer RNAs. This chain is tRNA pseudouridine synthase A, found in Erythrobacter litoralis (strain HTCC2594).